The primary structure comprises 198 residues: Probable GTP-binding protein EngB (198 aa).

In terms of domain architecture, EngB-type G spans 22–195; that stretch reads DLPEIALAGR…WKAIHKMTKT (174 aa). GTP contacts are provided by residues 30–37, 57–61, 75–78, 142–145, and 174–176; these read GRSNVGKS, GKTQT, DVPG, TKAD, and FSS. Serine 37 and threonine 59 together coordinate Mg(2+).

This sequence belongs to the TRAFAC class TrmE-Era-EngA-EngB-Septin-like GTPase superfamily. EngB GTPase family. Requires Mg(2+) as cofactor.

In terms of biological role, necessary for normal cell division and for the maintenance of normal septation. The chain is Probable GTP-binding protein EngB from Bacillus mycoides (strain KBAB4) (Bacillus weihenstephanensis).